The chain runs to 259 residues: Global transcriptional regulator CodY (259 aa).

The GAF domain stretch occupies residues 1–155 (MNLLEKTRKI…GATVVGMEIL (155 aa)). The H-T-H motif DNA-binding region spans 203 to 222 (ASKIADRVGITRSVIVNALR). Serine 215 is subject to Phosphoserine.

It belongs to the CodY family.

It localises to the cytoplasm. DNA-binding global transcriptional regulator which is involved in the adaptive response to starvation and acts by directly or indirectly controlling the expression of numerous genes in response to nutrient availability. During rapid exponential growth, CodY is highly active and represses genes whose products allow adaptation to nutrient depletion. The sequence is that of Global transcriptional regulator CodY from Lysinibacillus sphaericus (strain C3-41).